Here is a 192-residue protein sequence, read N- to C-terminus: Ion-translocating oxidoreductase complex subunit B (192 aa).

Residues 1-26 (MNAIWIAVAAVSLLGLAFGAILGYAS) form a hydrophobic region. The 4Fe-4S domain occupies 32–91 (EDDPVVEKIDEILPQSQCGQCGYPGCRPYAEAISCNGEKINRCAPGGEAVMLKIAELLNV). [4Fe-4S] cluster is bound by residues Cys49, Cys52, Cys57, Cys74, Cys117, Cys120, Cys123, Cys127, Cys147, Cys150, Cys153, and Cys157. 2 consecutive 4Fe-4S ferredoxin-type domains span residues 108–137 (MVAV…GATR) and 138–167 (AMHT…LQPV).

Belongs to the 4Fe4S bacterial-type ferredoxin family. RnfB subfamily. In terms of assembly, the complex is composed of six subunits: RsxA, RsxB, RsxC, RsxD, RsxE and RsxG. Requires [4Fe-4S] cluster as cofactor.

It is found in the cell inner membrane. Its function is as follows. Part of a membrane-bound complex that couples electron transfer with translocation of ions across the membrane. Required to maintain the reduced state of SoxR. The chain is Ion-translocating oxidoreductase complex subunit B from Shigella dysenteriae serotype 1 (strain Sd197).